The primary structure comprises 141 residues: Hemoglobin subunit alpha (141 aa).

A Globin domain is found at 1-141; that stretch reads VLSAADKTNV…VSTVLTSKYR (141 aa). Serine 3 is subject to Phosphoserine. Residue lysine 7 is modified to N6-succinyllysine. Threonine 8 is subject to Phosphothreonine. Lysine 11 bears the N6-succinyllysine mark. Lysine 16 is subject to N6-acetyllysine; alternate. Lysine 16 is modified (N6-succinyllysine; alternate). Residue tyrosine 24 is modified to Phosphotyrosine. Phosphoserine is present on serine 35. Lysine 40 is subject to N6-succinyllysine. Serine 49 is subject to Phosphoserine. Histidine 58 is a binding site for O2. Heme b is bound at residue histidine 87. Serine 102 is subject to Phosphoserine. Threonine 108 bears the Phosphothreonine mark. Phosphoserine occurs at positions 124 and 131. Phosphothreonine is present on residues threonine 134 and threonine 137. At serine 138 the chain carries Phosphoserine.

It belongs to the globin family. Heterotetramer of two alpha chains and two beta chains. Red blood cells.

Involved in oxygen transport from the lung to the various peripheral tissues. In Tamiasciurus hudsonicus (American red squirrel), this protein is Hemoglobin subunit alpha.